A 42-amino-acid polypeptide reads, in one-letter code: Photosystem I reaction center subunit IX (42 aa).

Residues 7–27 (YLSVAPVLSTLWFGSLAGLLI) traverse the membrane as a helical segment.

This sequence belongs to the PsaJ family.

Its subcellular location is the plastid. The protein resides in the chloroplast thylakoid membrane. May help in the organization of the PsaE and PsaF subunits. This is Photosystem I reaction center subunit IX from Daucus carota (Wild carrot).